The primary structure comprises 167 residues: Mediator of RNA polymerase II transcription subunit 10 (167 aa).

Gly residues predominate over residues 141–158; it reads TGGRTVGGEGEGAGQGEG. The tract at residues 141–167 is disordered; sequence TGGRTVGGEGEGAGQGEGGEGRGEGGN.

This sequence belongs to the Mediator complex subunit 10 family. Component of the Mediator complex.

It localises to the nucleus. Functionally, component of the Mediator complex, a coactivator involved in the regulated transcription of nearly all RNA polymerase II-dependent genes. Mediator functions as a bridge to convey information from gene-specific regulatory proteins to the basal RNA polymerase II transcription machinery. Mediator is recruited to promoters by direct interactions with regulatory proteins and serves as a scaffold for the assembly of a functional preinitiation complex with RNA polymerase II and the general transcription factors. The protein is Mediator of RNA polymerase II transcription subunit 10 (NUT2) of Chaetomium globosum (strain ATCC 6205 / CBS 148.51 / DSM 1962 / NBRC 6347 / NRRL 1970) (Soil fungus).